The primary structure comprises 479 residues: Flavonol 3-O-glucosyltransferase UGT71C4 (479 aa).

Histidine 17 functions as the Proton acceptor in the catalytic mechanism. An anthocyanidin is bound at residue histidine 17. Catalysis depends on aspartate 127, which acts as the Charge relay. Residues threonine 150, alanine 350, glutamine 352, histidine 367, tryptophan 370, asparagine 371, serine 372, and glutamate 375 each coordinate UDP-alpha-D-glucose. Alanine 390 contacts an anthocyanidin. UDP-alpha-D-glucose is bound by residues glutamate 391 and glutamine 392.

The protein belongs to the UDP-glycosyltransferase family.

It catalyses the reaction a flavonol + UDP-alpha-D-glucose = a flavonol 3-O-beta-D-glucoside + UDP + H(+). The enzyme catalyses a 7-O-hydroxy-flavonol + UDP-alpha-D-glucose = a flavonol 7-O-beta-D-glucoside + UDP + H(+). In terms of biological role, possesses quercetin 3-O-glucosyltransferase and 7-O-glucosyltransferase activities in vitro. Also active in vitro on benzoates and benzoate derivatives. In Arabidopsis thaliana (Mouse-ear cress), this protein is Flavonol 3-O-glucosyltransferase UGT71C4.